We begin with the raw amino-acid sequence, 240 residues long: UDP-2,3-diacylglucosamine hydrolase (240 aa).

Residues D8, H10, D41, N79, and H114 each coordinate Mn(2+). Residue 79–80 (NR) participates in substrate binding. Substrate-binding residues include D122, S160, N164, K167, and H195. H195 and H197 together coordinate Mn(2+).

The protein belongs to the LpxH family. It depends on Mn(2+) as a cofactor.

Its subcellular location is the cell inner membrane. It catalyses the reaction UDP-2-N,3-O-bis[(3R)-3-hydroxytetradecanoyl]-alpha-D-glucosamine + H2O = 2-N,3-O-bis[(3R)-3-hydroxytetradecanoyl]-alpha-D-glucosaminyl 1-phosphate + UMP + 2 H(+). Its pathway is glycolipid biosynthesis; lipid IV(A) biosynthesis; lipid IV(A) from (3R)-3-hydroxytetradecanoyl-[acyl-carrier-protein] and UDP-N-acetyl-alpha-D-glucosamine: step 4/6. Its function is as follows. Hydrolyzes the pyrophosphate bond of UDP-2,3-diacylglucosamine to yield 2,3-diacylglucosamine 1-phosphate (lipid X) and UMP by catalyzing the attack of water at the alpha-P atom. Involved in the biosynthesis of lipid A, a phosphorylated glycolipid that anchors the lipopolysaccharide to the outer membrane of the cell. This is UDP-2,3-diacylglucosamine hydrolase from Salmonella agona (strain SL483).